The chain runs to 118 residues: NAD(P)H-quinone oxidoreductase subunit M (118 aa).

The protein belongs to the complex I NdhM subunit family. NDH-1 can be composed of about 15 different subunits; different subcomplexes with different compositions have been identified which probably have different functions.

Its subcellular location is the cellular thylakoid membrane. The catalysed reaction is a plastoquinone + NADH + (n+1) H(+)(in) = a plastoquinol + NAD(+) + n H(+)(out). It carries out the reaction a plastoquinone + NADPH + (n+1) H(+)(in) = a plastoquinol + NADP(+) + n H(+)(out). NDH-1 shuttles electrons from an unknown electron donor, via FMN and iron-sulfur (Fe-S) centers, to quinones in the respiratory and/or the photosynthetic chain. The immediate electron acceptor for the enzyme in this species is believed to be plastoquinone. Couples the redox reaction to proton translocation, and thus conserves the redox energy in a proton gradient. Cyanobacterial NDH-1 also plays a role in inorganic carbon-concentration. The protein is NAD(P)H-quinone oxidoreductase subunit M of Rippkaea orientalis (strain PCC 8801 / RF-1) (Cyanothece sp. (strain PCC 8801)).